Reading from the N-terminus, the 366-residue chain is 3-dehydroquinate synthase (366 aa).

Residues 107–111, 131–132, Lys-144, and Lys-153 contribute to the NAD(+) site; these read GVIGD and TS. Glu-186, His-251, and His-268 together coordinate Zn(2+).

Belongs to the sugar phosphate cyclases superfamily. Dehydroquinate synthase family. Requires Co(2+) as cofactor. It depends on Zn(2+) as a cofactor. The cofactor is NAD(+).

It localises to the cytoplasm. It carries out the reaction 7-phospho-2-dehydro-3-deoxy-D-arabino-heptonate = 3-dehydroquinate + phosphate. The protein operates within metabolic intermediate biosynthesis; chorismate biosynthesis; chorismate from D-erythrose 4-phosphate and phosphoenolpyruvate: step 2/7. Catalyzes the conversion of 3-deoxy-D-arabino-heptulosonate 7-phosphate (DAHP) to dehydroquinate (DHQ). The sequence is that of 3-dehydroquinate synthase from Rippkaea orientalis (strain PCC 8801 / RF-1) (Cyanothece sp. (strain PCC 8801)).